The primary structure comprises 308 residues: Aspartate carbamoyltransferase catalytic subunit (308 aa).

Residues Arg-59 and Thr-60 each contribute to the carbamoyl phosphate site. L-aspartate is bound at residue Lys-87. Arg-109, His-139, and Gln-142 together coordinate carbamoyl phosphate. 2 residues coordinate L-aspartate: Arg-172 and Arg-224. Positions 265 and 266 each coordinate carbamoyl phosphate.

Belongs to the aspartate/ornithine carbamoyltransferase superfamily. ATCase family. Heterododecamer (2C3:3R2) of six catalytic PyrB chains organized as two trimers (C3), and six regulatory PyrI chains organized as three dimers (R2).

It carries out the reaction carbamoyl phosphate + L-aspartate = N-carbamoyl-L-aspartate + phosphate + H(+). It functions in the pathway pyrimidine metabolism; UMP biosynthesis via de novo pathway; (S)-dihydroorotate from bicarbonate: step 2/3. Functionally, catalyzes the condensation of carbamoyl phosphate and aspartate to form carbamoyl aspartate and inorganic phosphate, the committed step in the de novo pyrimidine nucleotide biosynthesis pathway. In Streptococcus thermophilus (strain ATCC BAA-491 / LMD-9), this protein is Aspartate carbamoyltransferase catalytic subunit.